The following is a 188-amino-acid chain: Peptidyl-tRNA hydrolase (188 aa).

Residue Phe15 coordinates tRNA. His20 (proton acceptor) is an active-site residue. The tRNA site is built by Tyr64, Asn66, and Asn112.

It belongs to the PTH family. Monomer.

Its subcellular location is the cytoplasm. It catalyses the reaction an N-acyl-L-alpha-aminoacyl-tRNA + H2O = an N-acyl-L-amino acid + a tRNA + H(+). Its function is as follows. Hydrolyzes ribosome-free peptidyl-tRNAs (with 1 or more amino acids incorporated), which drop off the ribosome during protein synthesis, or as a result of ribosome stalling. In terms of biological role, catalyzes the release of premature peptidyl moieties from peptidyl-tRNA molecules trapped in stalled 50S ribosomal subunits, and thus maintains levels of free tRNAs and 50S ribosomes. This Borreliella afzelii (strain PKo) (Borrelia afzelii) protein is Peptidyl-tRNA hydrolase.